The following is a 55-amino-acid chain: ATP synthase protein 8 (55 aa).

Residues proline 6 to lysine 26 traverse the membrane as a helical segment.

This sequence belongs to the ATPase protein 8 family. As to quaternary structure, F-type ATPases have 2 components, CF(1) - the catalytic core - and CF(0) - the membrane proton channel.

It is found in the mitochondrion membrane. Its function is as follows. Mitochondrial membrane ATP synthase (F(1)F(0) ATP synthase or Complex V) produces ATP from ADP in the presence of a proton gradient across the membrane which is generated by electron transport complexes of the respiratory chain. F-type ATPases consist of two structural domains, F(1) - containing the extramembraneous catalytic core and F(0) - containing the membrane proton channel, linked together by a central stalk and a peripheral stalk. During catalysis, ATP synthesis in the catalytic domain of F(1) is coupled via a rotary mechanism of the central stalk subunits to proton translocation. Part of the complex F(0) domain. Minor subunit located with subunit a in the membrane. This Squalus acanthias (Spiny dogfish) protein is ATP synthase protein 8 (MT-ATP8).